The chain runs to 236 residues: Large ribosomal subunit protein uL3 (236 aa).

A disordered region spans residues 215 to 236 (PAPEPAAPVAAAAAGTGEEASA). Residues 221–236 (APVAAAAAGTGEEASA) show a composition bias toward low complexity.

It belongs to the universal ribosomal protein uL3 family. Part of the 50S ribosomal subunit. Forms a cluster with proteins L14 and L19.

One of the primary rRNA binding proteins, it binds directly near the 3'-end of the 23S rRNA, where it nucleates assembly of the 50S subunit. This is Large ribosomal subunit protein uL3 from Parafrankia sp. (strain EAN1pec).